The following is a 218-amino-acid chain: Large ribosomal subunit protein uL3 (218 aa).

Gln-153 carries the N5-methylglutamine modification.

Belongs to the universal ribosomal protein uL3 family. In terms of assembly, part of the 50S ribosomal subunit. Forms a cluster with proteins L14 and L19. Methylated by PrmB.

Its function is as follows. One of the primary rRNA binding proteins, it binds directly near the 3'-end of the 23S rRNA, where it nucleates assembly of the 50S subunit. The protein is Large ribosomal subunit protein uL3 of Alkalilimnicola ehrlichii (strain ATCC BAA-1101 / DSM 17681 / MLHE-1).